Here is a 104-residue protein sequence, read N- to C-terminus: Flagellar hook-basal body complex protein FliE (104 aa).

It belongs to the FliE family.

It localises to the bacterial flagellum basal body. This Salmonella heidelberg (strain SL476) protein is Flagellar hook-basal body complex protein FliE.